A 376-amino-acid polypeptide reads, in one-letter code: Serpin B9 (376 aa).

Met1 is subject to N-acetylmethionine.

The protein belongs to the serpin family. Ov-serpin subfamily.

It is found in the cytoplasm. Its function is as follows. Granzyme B inhibitor. The sequence is that of Serpin B9 (SERPINB9) from Homo sapiens (Human).